The sequence spans 628 residues: ATP-dependent zinc metalloprotease FtsH (628 aa).

The Stromal segment spans residues 1-7 (MKLSWKT). A helical transmembrane segment spans residues 8–28 (LLLWSLPIFVVGFFFWQGFLG). The Lumenal segment spans residues 29–118 (PTTTDVGSNI…AHPPKSTSAV (90 aa)). A helical membrane pass occupies residues 119-139 (WGLLGNLLFPLILVGGLAFLF). Over 140–628 (RRSNNASGGP…PEKNYYISQF (489 aa)) the chain is Stromal. 213-220 (GPPGTGKT) provides a ligand contact to ATP. His-434 lines the Zn(2+) pocket. Residue Glu-435 is part of the active site. Zn(2+) contacts are provided by His-438 and Asp-512.

In the central section; belongs to the AAA ATPase family. The protein in the C-terminal section; belongs to the peptidase M41 family. In terms of assembly, homohexamer. The cofactor is Zn(2+).

The protein resides in the plastid. It is found in the chloroplast thylakoid membrane. In terms of biological role, acts as a processive, ATP-dependent zinc metallopeptidase. This Porphyra purpurea (Red seaweed) protein is ATP-dependent zinc metalloprotease FtsH.